The following is a 126-amino-acid chain: UPF0102 protein gll3754 (126 aa).

It belongs to the UPF0102 family.

This chain is UPF0102 protein gll3754, found in Gloeobacter violaceus (strain ATCC 29082 / PCC 7421).